The chain runs to 298 residues: 4-hydroxy-tetrahydrodipicolinate synthase (298 aa).

Thr51 serves as a coordination point for pyruvate. Catalysis depends on Tyr139, which acts as the Proton donor/acceptor. Lys167 serves as the catalytic Schiff-base intermediate with substrate. Ile209 contacts pyruvate.

The protein belongs to the DapA family. In terms of assembly, homotetramer; dimer of dimers.

Its subcellular location is the cytoplasm. The catalysed reaction is L-aspartate 4-semialdehyde + pyruvate = (2S,4S)-4-hydroxy-2,3,4,5-tetrahydrodipicolinate + H2O + H(+). Its pathway is amino-acid biosynthesis; L-lysine biosynthesis via DAP pathway; (S)-tetrahydrodipicolinate from L-aspartate: step 3/4. Catalyzes the condensation of (S)-aspartate-beta-semialdehyde [(S)-ASA] and pyruvate to 4-hydroxy-tetrahydrodipicolinate (HTPA). The chain is 4-hydroxy-tetrahydrodipicolinate synthase from Haemophilus influenzae (strain PittGG).